A 71-amino-acid polypeptide reads, in one-letter code: MNQSAQNYFSVQKPSETSSGPYTSPPPIGYPTRDAVVGDPPAAAVETNSKGVNPEGCCAAICCCCVLDACF.

The segment covering 1 to 22 has biased composition (polar residues); the sequence is MNQSAQNYFSVQKPSETSSGPY. The tract at residues 1-35 is disordered; that stretch reads MNQSAQNYFSVQKPSETSSGPYTSPPPIGYPTRDA. A helical membrane pass occupies residues 48–64; that stretch reads NSKGVNPEGCCAAICCC.

It belongs to the CYSTM1 family. As to expression, mostly expressed in stems, siliques, roots and flowers and, to a lower extent, in leaves.

It localises to the membrane. The protein localises to the nucleus. Involved in resistance to abiotic stress. The sequence is that of Protein CYSTEINE-RICH TRANSMEMBRANE MODULE 8 from Arabidopsis thaliana (Mouse-ear cress).